Consider the following 333-residue polypeptide: Glycerol-3-phosphate dehydrogenase [NAD(P)+] (333 aa).

The NADPH site is built by Tyr-14, His-34, and Lys-108. Positions 108, 137, and 139 each coordinate sn-glycerol 3-phosphate. Residue Ala-141 participates in NADPH binding. Residues Lys-193, Asp-247, Ser-257, Arg-258, and Asn-259 each contribute to the sn-glycerol 3-phosphate site. Lys-193 (proton acceptor) is an active-site residue. Arg-258 serves as a coordination point for NADPH. 2 residues coordinate NADPH: Leu-282 and Glu-284.

Belongs to the NAD-dependent glycerol-3-phosphate dehydrogenase family.

It localises to the cytoplasm. The catalysed reaction is sn-glycerol 3-phosphate + NAD(+) = dihydroxyacetone phosphate + NADH + H(+). It catalyses the reaction sn-glycerol 3-phosphate + NADP(+) = dihydroxyacetone phosphate + NADPH + H(+). The protein operates within membrane lipid metabolism; glycerophospholipid metabolism. Functionally, catalyzes the reduction of the glycolytic intermediate dihydroxyacetone phosphate (DHAP) to sn-glycerol 3-phosphate (G3P), the key precursor for phospholipid synthesis. This chain is Glycerol-3-phosphate dehydrogenase [NAD(P)+], found in Blochmanniella floridana.